The chain runs to 106 residues: Small ribosomal subunit protein uS10 (106 aa).

It belongs to the universal ribosomal protein uS10 family. As to quaternary structure, part of the 30S ribosomal subunit.

In terms of biological role, involved in the binding of tRNA to the ribosomes. This Pyrobaculum arsenaticum (strain DSM 13514 / JCM 11321 / PZ6) protein is Small ribosomal subunit protein uS10.